We begin with the raw amino-acid sequence, 134 residues long: Aspartate 1-decarboxylase (134 aa).

Ser-25 functions as the Schiff-base intermediate with substrate; via pyruvic acid in the catalytic mechanism. Ser-25 is subject to Pyruvic acid (Ser). Thr-57 contributes to the substrate binding site. Tyr-58 serves as the catalytic Proton donor. Residue 73–75 coordinates substrate; sequence GAA.

This sequence belongs to the PanD family. Heterooctamer of four alpha and four beta subunits. Pyruvate serves as cofactor. Is synthesized initially as an inactive proenzyme, which is activated by self-cleavage at a specific serine bond to produce a beta-subunit with a hydroxyl group at its C-terminus and an alpha-subunit with a pyruvoyl group at its N-terminus.

The protein resides in the cytoplasm. The catalysed reaction is L-aspartate + H(+) = beta-alanine + CO2. The protein operates within cofactor biosynthesis; (R)-pantothenate biosynthesis; beta-alanine from L-aspartate: step 1/1. Functionally, catalyzes the pyruvoyl-dependent decarboxylation of aspartate to produce beta-alanine. The protein is Aspartate 1-decarboxylase of Mycolicibacterium gilvum (strain PYR-GCK) (Mycobacterium gilvum (strain PYR-GCK)).